The sequence spans 447 residues: GTPase Der (447 aa).

2 EngA-type G domains span residues lysine 4–glutamate 165 and leucine 180–asparagine 357. GTP-binding positions include glycine 10–serine 17, aspartate 57–leucine 61, asparagine 119–glutamate 122, glycine 186–serine 193, aspartate 233–leucine 237, and asparagine 298–aspartate 301. Positions lysine 358–lysine 443 constitute a KH-like domain.

It belongs to the TRAFAC class TrmE-Era-EngA-EngB-Septin-like GTPase superfamily. EngA (Der) GTPase family. Associates with the 50S ribosomal subunit.

GTPase that plays an essential role in the late steps of ribosome biogenesis. The protein is GTPase Der of Rickettsia typhi (strain ATCC VR-144 / Wilmington).